A 941-amino-acid polypeptide reads, in one-letter code: Protocadherin alpha-12 (941 aa).

The signal sequence occupies residues 1–29; that stretch reads MVIIGPRGPGSQRLLLSLLLLAAWEVGSG. Cadherin domains lie at 30 to 133, 134 to 242, 243 to 350, 351 to 455, 456 to 565, and 581 to 678; these read QLHY…PPVF, RERE…GPAF, DKPS…VPEV, MVTS…APAF, AQPE…APAL, and VPRS…APKT. At 30–697 the chain is on the extracellular side; that stretch reads QLHYSVYEEA…DPEAALVDIN (668 aa). 2 N-linked (GlcNAc...) asparagine glycosylation sites follow: asparagine 257 and asparagine 265. Residue asparagine 548 is glycosylated (N-linked (GlcNAc...) asparagine). The chain crosses the membrane as a helical span at residues 698-718; that stretch reads VYLIIAICAVSSLLVLTLLLY. Topologically, residues 719-941 are cytoplasmic; that stretch reads TALRCSAPPT…GNSTTDNSDQ (223 aa). PXXP repeat units lie at residues 734–737, 790–793, 823–826, 863–866, and 882–885; these read PGKP, PRQP, PGGP, GPGN, and PGSP. The interval 734–885 is 5 X 4 AA repeats of P-X-X-P; sequence PGKPTLVCSS…PDKFIIPGSP (152 aa). Residues 818-941 are disordered; the sequence is ILRAGPGGPD…GNSTTDNSDQ (124 aa). A compositionally biased stretch (basic and acidic residues) spans 900–914; that stretch reads DKSDFITFGKKEETK.

Its subcellular location is the cell membrane. Functionally, potential calcium-dependent cell-adhesion protein. May be involved in the establishment and maintenance of specific neuronal connections in the brain. The protein is Protocadherin alpha-12 (PCDHA12) of Pan troglodytes (Chimpanzee).